The following is a 274-amino-acid chain: Shikimate dehydrogenase (NADP(+)) (274 aa).

Shikimate is bound by residues 20 to 22 and Thr68; that span reads SKS. The Proton acceptor role is filled by Lys72. Residue Asp84 participates in NADP(+) binding. Shikimate is bound by residues Asn93 and Asp109. NADP(+)-binding positions include 131–135 and Leu217; that span reads GAGGA. Tyr219 contributes to the shikimate binding site. Gly240 is an NADP(+) binding site.

Belongs to the shikimate dehydrogenase family. Homodimer.

It carries out the reaction shikimate + NADP(+) = 3-dehydroshikimate + NADPH + H(+). The protein operates within metabolic intermediate biosynthesis; chorismate biosynthesis; chorismate from D-erythrose 4-phosphate and phosphoenolpyruvate: step 4/7. In terms of biological role, involved in the biosynthesis of the chorismate, which leads to the biosynthesis of aromatic amino acids. Catalyzes the reversible NADPH linked reduction of 3-dehydroshikimate (DHSA) to yield shikimate (SA). The sequence is that of Shikimate dehydrogenase (NADP(+)) from Sphingopyxis alaskensis (strain DSM 13593 / LMG 18877 / RB2256) (Sphingomonas alaskensis).